The chain runs to 397 residues: Serine/threonine-protein kinase 17A (397 aa).

A disordered region spans residues methionine 1 to glycine 23. At serine 9 the chain carries Phosphoserine. Residues leucine 44–leucine 304 enclose the Protein kinase domain. ATP is bound by residues leucine 50 to valine 58 and lysine 73. Aspartate 169 (proton acceptor) is an active-site residue.

It belongs to the protein kinase superfamily. CAMK Ser/Thr protein kinase family. DAP kinase subfamily. In terms of processing, autophosphorylated. In terms of tissue distribution, highly expressed in bone marrow. Lower levels in brain, heart, lung, liver and kidney.

The protein localises to the nucleus. It catalyses the reaction L-seryl-[protein] + ATP = O-phospho-L-seryl-[protein] + ADP + H(+). It carries out the reaction L-threonyl-[protein] + ATP = O-phospho-L-threonyl-[protein] + ADP + H(+). Its activity is regulated as follows. Inhibited by thiazolidinedione-type compounds: inhibited by furan- and pyridone- thiazolidinediones. Functionally, acts as a positive regulator of apoptosis. May also act as a regulator of cellular reactive oxygen species. The polypeptide is Serine/threonine-protein kinase 17A (STK17A) (Oryctolagus cuniculus (Rabbit)).